We begin with the raw amino-acid sequence, 214 residues long: Large ribosomal subunit protein uL16 (214 aa).

Arg-32 carries the citrulline modification. A Glycyl lysine isopeptide (Lys-Gly) (interchain with G-Cter in SUMO2) cross-link involves residue Lys-175. Lys-188 participates in a covalent cross-link: Glycyl lysine isopeptide (Lys-Gly) (interchain with G-Cter in ubiquitin).

The protein belongs to the universal ribosomal protein uL16 family. In terms of assembly, component of the large ribosomal subunit. Mature ribosomes consist of a small (40S) and a large (60S) subunit. The 40S subunit contains about 33 different proteins and 1 molecule of RNA (18S). The 60S subunit contains about 49 different proteins and 3 molecules of RNA (28S, 5.8S and 5S). Post-translationally, citrullinated by PADI4. Ufmylated by UFL1.

It is found in the cytoplasm. In terms of biological role, component of the large ribosomal subunit. Plays a role in the formation of actively translating ribosomes. May play a role in the embryonic brain development. The polypeptide is Large ribosomal subunit protein uL16 (Bos taurus (Bovine)).